Here is a 464-residue protein sequence, read N- to C-terminus: Fumarate hydratase class II (464 aa).

Residues 96–98, 127–130, 137–139, and Thr185 contribute to the substrate site; these read SGT, HPND, and SSN. His186 functions as the Proton donor/acceptor in the catalytic mechanism. Ser316 is a catalytic residue. Residues Ser317 and 322-324 contribute to the substrate site; that span reads KVN.

Belongs to the class-II fumarase/aspartase family. Fumarase subfamily. As to quaternary structure, homotetramer.

The protein resides in the cytoplasm. It carries out the reaction (S)-malate = fumarate + H2O. It participates in carbohydrate metabolism; tricarboxylic acid cycle; (S)-malate from fumarate: step 1/1. In terms of biological role, involved in the TCA cycle. Catalyzes the stereospecific interconversion of fumarate to L-malate. The polypeptide is Fumarate hydratase class II (Pseudomonas putida (strain ATCC 47054 / DSM 6125 / CFBP 8728 / NCIMB 11950 / KT2440)).